A 477-amino-acid polypeptide reads, in one-letter code: UDP-N-acetylmuramate--L-alanine ligase (477 aa).

Gly122–Thr128 contacts ATP.

It belongs to the MurCDEF family.

Its subcellular location is the cytoplasm. The catalysed reaction is UDP-N-acetyl-alpha-D-muramate + L-alanine + ATP = UDP-N-acetyl-alpha-D-muramoyl-L-alanine + ADP + phosphate + H(+). It participates in cell wall biogenesis; peptidoglycan biosynthesis. In terms of biological role, cell wall formation. The protein is UDP-N-acetylmuramate--L-alanine ligase of Xanthomonas campestris pv. campestris (strain 8004).